The following is a 190-amino-acid chain: Holliday junction branch migration complex subunit RuvA (190 aa).

A domain I region spans residues 1–64 (MIGRITGTLI…EDAHLLYGFG (64 aa)). The segment at 65–137 (TASERAAFRE…MRGKLGADIG (73 aa)) is domain II. A flexible linker region spans residues 137 to 141 (GATPH). Residues 142–190 (AVPDSQSDILNALLALGYSEKESLAALKTLPEGLGVSDGIRQALKALAR) form a domain III region.

This sequence belongs to the RuvA family. As to quaternary structure, homotetramer. Forms an RuvA(8)-RuvB(12)-Holliday junction (HJ) complex. HJ DNA is sandwiched between 2 RuvA tetramers; dsDNA enters through RuvA and exits via RuvB. An RuvB hexamer assembles on each DNA strand where it exits the tetramer. Each RuvB hexamer is contacted by two RuvA subunits (via domain III) on 2 adjacent RuvB subunits; this complex drives branch migration. In the full resolvosome a probable DNA-RuvA(4)-RuvB(12)-RuvC(2) complex forms which resolves the HJ.

It is found in the cytoplasm. Functionally, the RuvA-RuvB-RuvC complex processes Holliday junction (HJ) DNA during genetic recombination and DNA repair, while the RuvA-RuvB complex plays an important role in the rescue of blocked DNA replication forks via replication fork reversal (RFR). RuvA specifically binds to HJ cruciform DNA, conferring on it an open structure. The RuvB hexamer acts as an ATP-dependent pump, pulling dsDNA into and through the RuvAB complex. HJ branch migration allows RuvC to scan DNA until it finds its consensus sequence, where it cleaves and resolves the cruciform DNA. In Bordetella avium (strain 197N), this protein is Holliday junction branch migration complex subunit RuvA.